Here is an 84-residue protein sequence, read N- to C-terminus: Cell division topological specificity factor (84 aa).

The protein belongs to the MinE family.

Prevents the cell division inhibition by proteins MinC and MinD at internal division sites while permitting inhibition at polar sites. This ensures cell division at the proper site by restricting the formation of a division septum at the midpoint of the long axis of the cell. The polypeptide is Cell division topological specificity factor (Desulfotalea psychrophila (strain LSv54 / DSM 12343)).